The sequence spans 583 residues: Membrane protein insertase YidC (583 aa).

Residues 5–25 (SVTGLALIALIMIVWLQFMSP) traverse the membrane as a helical segment. Positions 28 to 50 (KSVQPDNRPKAQTTATVSQEKTE) are disordered. Over residues 37 to 46 (KAQTTATVSQ) the composition is skewed to polar residues. A run of 5 helical transmembrane segments spans residues 341-361 (PFAE…ISNY), 362-382 (GLII…LSMA), 427-447 (LGGC…FYVF), 477-497 (IPVY…TVFI), and 515-535 (LYIF…GLGL).

Belongs to the OXA1/ALB3/YidC family. Type 1 subfamily. In terms of assembly, interacts with the Sec translocase complex via SecD. Specifically interacts with transmembrane segments of nascent integral membrane proteins during membrane integration.

The protein resides in the cell inner membrane. Its function is as follows. Required for the insertion and/or proper folding and/or complex formation of integral membrane proteins into the membrane. Involved in integration of membrane proteins that insert both dependently and independently of the Sec translocase complex, as well as at least some lipoproteins. Aids folding of multispanning membrane proteins. This is Membrane protein insertase YidC from Chlorobium limicola (strain DSM 245 / NBRC 103803 / 6330).